A 780-amino-acid chain; its full sequence is Ribonucleoside-diphosphate reductase large subunit (780 aa).

Substrate-binding positions include T177, 192–193 (SC), G223, 393–397 (NLCAE), and 595–599 (PTVGS). A disulfide bridge connects residues C193 and C409. Catalysis depends on N393, which acts as the Proton acceptor. The active-site Cysteine radical intermediate is C395. Residue E397 is the Proton acceptor of the active site.

The protein belongs to the ribonucleoside diphosphate reductase large chain family. In terms of assembly, heterotetramer composed of a homodimer of the large subunit (R1) and a homodimer of the small subunit (R2). Larger multisubunit protein complex are also active, composed of (R1)n(R2)n.

It catalyses the reaction a 2'-deoxyribonucleoside 5'-diphosphate + [thioredoxin]-disulfide + H2O = a ribonucleoside 5'-diphosphate + [thioredoxin]-dithiol. In terms of biological role, ribonucleoside-diphosphate reductase holoenzyme provides the precursors necessary for viral DNA synthesis. Allows virus growth in non-dividing cells, as well as reactivation from latency in infected hosts. Catalyzes the biosynthesis of deoxyribonucleotides from the corresponding ribonucleotides. The sequence is that of Ribonucleoside-diphosphate reductase large subunit from Connochaetes taurinus (Blue wildebeest).